The chain runs to 278 residues: HTH-type transcriptional activator RhaS (278 aa).

The HTH araC/xylS-type domain occupies 174–272 (NLLLAWLEDH…NWSPRDIRQG (99 aa)). 2 consecutive DNA-binding regions (H-T-H motif) follow at residues 191 to 212 (DAVADQFSLSLRTLHRQLKQQT) and 239 to 262 (VTDIAYRCGFSDSNHFSTLFRREF).

Binds DNA as a dimer.

It is found in the cytoplasm. Activates expression of the rhaBAD and rhaT operons. The polypeptide is HTH-type transcriptional activator RhaS (Escherichia coli (strain SMS-3-5 / SECEC)).